The following is a 98-amino-acid chain: Putative septation protein SpoVG (98 aa).

Belongs to the SpoVG family.

Functionally, essential for sporulation. Interferes with or is a negative regulator of the pathway leading to asymmetric septation. The sequence is that of Putative septation protein SpoVG from Bacillus pumilus (strain SAFR-032).